We begin with the raw amino-acid sequence, 587 residues long: Serine/threonine-protein phosphatase 2A 65 kDa regulatory subunit A beta isoform (587 aa).

The residue at position 2 (S2) is an N-acetylserine. HEAT repeat units lie at residues 2–42, 44–80, 81–119, 158–196, 197–235, 236–274, 275–313, 315–352, 353–391, 393–430, 432–469, 470–508, 509–547, and 549–586; these read SMID…ALGE, RTRK…YVGG, VEYA…QMRE, DMLK…TVES, AHLK…LLEP, QDCV…AVGP, EPTR…ILNP, IAIQ…VLGK, DATI…VIGI, LLSQ…QLGV, FFDD…EFGP, EWAM…VMGS, EITC…IVDQ, and VVEK…VMMS.

It belongs to the phosphatase 2A regulatory subunit A family. As to quaternary structure, PP2A consists of a common heterodimeric core enzyme, composed of a 36 kDa catalytic subunit (subunit C) and a 65 kDa constant regulatory subunit (subunit A), that associates with a variety of regulatory subunits such as subunits B (the R2/B/PR55/B55, R3/B''/PR72/PR130/PR59 and R5/B'/B56 families). Interacts with B'THETA. Interacts with SRK2E/OST1. Interacts with SIC/RON3. Ubiquitous, with higher levels in roots and flowers (at protein level).

The protein resides in the cytoplasm. Its subcellular location is the cytosol. It localises to the nucleus. It is found in the peroxisome. Functionally, the A subunit of protein phosphatase 2A serves as a scaffolding molecule to coordinate the assembly of the catalytic subunit and a variable regulatory B subunit. Involved during developmental process such as seedling and floral developments. Seems to act as a negative regulator of PP2A catalytic activity. Associates with the serine/threonine-protein phosphatase PP2A catalytic subunit C and regulatory subunit B' to positively regulates beta-oxidation of fatty acids and protoauxins in peroxisomes by dephosphorylating peroxisomal beta-oxidation-related proteins. The protein is Serine/threonine-protein phosphatase 2A 65 kDa regulatory subunit A beta isoform (PP2AA2) of Arabidopsis thaliana (Mouse-ear cress).